We begin with the raw amino-acid sequence, 352 residues long: Plant intracellular Ras-group-related LRR protein 1 (352 aa).

A disordered region spans residues 1–25 (MREMGEKRRRGHLNPAGFAGGLHDH). LRR repeat units follow at residues 29–52 (KNEEHKLDMSGMSMDALPHLTMSL), 53–75 (GQVTILDLSNNNLESIPESIIAR), 77–99 (LNVVVLDVRSNQLKSLPNSIGCL), 100–122 (SKLKVLNVSGNLLESLPNTIEEC), 124–146 (ALEELHANFNELTKLPDTLGFEL), 147–169 (HSLRKLSVNSNKLAQLPSSTSHM), 171–192 (ALRALDARLNCLRALPDGLENL), 195–217 (LEALNVSQNFQFLRELPYAVGLL), 218–241 (ASLRELDVSYNSIAALPDSMGCLT), and 243–263 (LARFSAVGNPLVSPPMDVVEQ). The GVYW; degenerate signature appears at 264–271 (GLDAMRAY).

It belongs to the SHOC2 family. In terms of tissue distribution, widely expressed but at a lower level in seedlings and stems.

Functionally, leucine-rich repeat protein that likely mediates protein interactions, possibly in the context of signal transduction. This chain is Plant intracellular Ras-group-related LRR protein 1 (IRL1), found in Oryza sativa subsp. japonica (Rice).